The sequence spans 623 residues: Glutathione import ATP-binding protein GsiA (623 aa).

ABC transporter domains are found at residues 15-269 and 325-564; these read VSGL…QTLL and LRSG…RKLM. Residues 49–56 and 357–364 contribute to the ATP site; these read GESGSGKS.

Belongs to the ABC transporter superfamily. Glutathione importer (TC 3.A.1.5.11) family. As to quaternary structure, the complex is composed of two ATP-binding proteins (GsiA), two transmembrane proteins (GsiC and GsiD) and a solute-binding protein (GsiB).

The protein resides in the cell inner membrane. It catalyses the reaction glutathione(out) + ATP + H2O = glutathione(in) + ADP + phosphate + H(+). In terms of biological role, part of the ABC transporter complex GsiABCD involved in glutathione import. Responsible for energy coupling to the transport system. This chain is Glutathione import ATP-binding protein GsiA, found in Salmonella typhimurium (strain LT2 / SGSC1412 / ATCC 700720).